We begin with the raw amino-acid sequence, 205 residues long: Guanylate kinase (205 aa).

The region spanning 6 to 184 is the Guanylate kinase-like domain; that stretch reads GLLLVVSGPS…SAKEIEGIIS (179 aa). 13 to 20 contacts ATP; the sequence is GPSGAGKG.

The protein belongs to the guanylate kinase family.

The protein resides in the cytoplasm. The enzyme catalyses GMP + ATP = GDP + ADP. In terms of biological role, essential for recycling GMP and indirectly, cGMP. The sequence is that of Guanylate kinase from Clostridioides difficile (strain 630) (Peptoclostridium difficile).